The primary structure comprises 459 residues: Cell division protein FtsZ (459 aa).

GTP is bound by residues 25–29 (GAGSN), 112–114 (GTG), Glu-143, Arg-147, and Asp-191. 2 disordered regions span residues 383–405 (DQAPNSTNDDMEPRVSLTNDAGE) and 427–459 (IPERKNVVVGMPDEETKESDIHDIPAFLRKKRD).

Belongs to the FtsZ family. In terms of assembly, homodimer. Polymerizes to form a dynamic ring structure in a strictly GTP-dependent manner. Interacts directly with several other division proteins.

Its subcellular location is the cytoplasm. Its function is as follows. Essential cell division protein that forms a contractile ring structure (Z ring) at the future cell division site. The regulation of the ring assembly controls the timing and the location of cell division. One of the functions of the FtsZ ring is to recruit other cell division proteins to the septum to produce a new cell wall between the dividing cells. Binds GTP and shows GTPase activity. The protein is Cell division protein FtsZ of Rickettsia bellii (strain RML369-C).